The sequence spans 247 residues: Uridylate kinase (247 aa).

11 to 14 (KASG) is a binding site for ATP. The involved in allosteric activation by GTP stretch occupies residues 19-24 (GKQGFG). Residue glycine 53 coordinates UMP. ATP contacts are provided by glycine 54 and arginine 58. Residues aspartate 73 and 134 to 141 (TGNPFFTT) contribute to the UMP site. ATP-binding residues include threonine 161, glutamine 162, tyrosine 167, and aspartate 170.

Belongs to the UMP kinase family. Homohexamer.

It localises to the cytoplasm. It carries out the reaction UMP + ATP = UDP + ADP. The protein operates within pyrimidine metabolism; CTP biosynthesis via de novo pathway; UDP from UMP (UMPK route): step 1/1. Allosterically activated by GTP. Inhibited by UTP. Its function is as follows. Catalyzes the reversible phosphorylation of UMP to UDP. This chain is Uridylate kinase, found in Chelativorans sp. (strain BNC1).